The following is a 385-amino-acid chain: Isocitrate dehydrogenase [NAD] subunit beta, mitochondrial (385 aa).

The transit peptide at 1 to 33 (MAALSRVRWLTRALVAAPNPGAWRSLCTSTVAQ) directs the protein to the mitochondrion. N6-acetyllysine is present on Lys199.

Belongs to the isocitrate and isopropylmalate dehydrogenases family. As to quaternary structure, heterooligomer of subunits alpha (IDH3A), beta (IDH3B), and gamma (IDH3G) in the apparent ratio of 2:1:1. The heterodimer containing one IDH3A and one IDH3B subunit and the heterodimer containing one IDH3A and one IDH3G subunit assemble into a heterotetramer (which contains two subunits of IDH3A, one of IDH3B and one of IDH3G) and further into the heterooctamer. As to expression, isoform A is predominant in heart muscle; also found in brain, kidney and liver. Isoform B is present in kidney and liver.

It is found in the mitochondrion. With respect to regulation, the heterotetramer and the heterodimer composed of IDH3A and IDH3G subunits can be allosterically activated by citrate (CIT) or/and ADP, and the two activators can act independently or synergistically. The heterodimer composed of IDH3A and IDH3B subunits cannot be allosterically regulated and the allosteric regulation of the heterotetramer is through the IDH3G subunit and not the IDH3B subunit. The IDH3G subunit contains the allosteric site which consists of a CIT-binding site and an ADP-binding site, and the binding of CIT and ADP causes conformational changes at the allosteric site which are transmitted to the active site in the catalytic subunit (IDH3A) through a cascade of conformational changes at the heterodimer interface, leading to stabilization of the isocitrate-binding at the active site and thus activation of the enzyme. ATP can activate the heterotetramer and the heterodimer composed of IDH3A and IDH3G subunits at low concentrations but inhibits their activities at high concentrations, whereas ATP exhibits only inhibitory effect on the heterodimer composed of IDH3A and IDH3B subunits. In terms of biological role, plays a structural role to facilitate the assembly and ensure the full activity of the enzyme catalyzing the decarboxylation of isocitrate (ICT) into alpha-ketoglutarate. The heterodimer composed of the alpha (IDH3A) and beta (IDH3B) subunits and the heterodimer composed of the alpha (IDH3A) and gamma (IDH3G) subunits, have considerable basal activity but the full activity of the heterotetramer (containing two subunits of IDH3A, one of IDH3B and one of IDH3G) requires the assembly and cooperative function of both heterodimers. The chain is Isocitrate dehydrogenase [NAD] subunit beta, mitochondrial (IDH3B) from Bos taurus (Bovine).